A 361-amino-acid chain; its full sequence is Glyceraldehyde-3-phosphate dehydrogenase, glycosomal (361 aa).

Residues 13–14 (RI), Asp39, Gln92, and Ser135 each bind NAD(+). D-glyceraldehyde 3-phosphate is bound by residues 166 to 168 (SCT), Thr198, 227 to 228 (TG), and Arg250. Cys167 (nucleophile) is an active-site residue. Asn336 serves as a coordination point for NAD(+). The short motif at 359-361 (SKM) is the Microbody targeting signal element.

Belongs to the glyceraldehyde-3-phosphate dehydrogenase family. Homotetramer.

It localises to the glycosome. The catalysed reaction is D-glyceraldehyde 3-phosphate + phosphate + NAD(+) = (2R)-3-phospho-glyceroyl phosphate + NADH + H(+). It functions in the pathway carbohydrate degradation; glycolysis; pyruvate from D-glyceraldehyde 3-phosphate: step 1/5. The chain is Glyceraldehyde-3-phosphate dehydrogenase, glycosomal (GAPG) from Leishmania mexicana.